We begin with the raw amino-acid sequence, 574 residues long: Protein misato (574 aa).

The protein belongs to the misato family.

It is found in the mitochondrion. The sequence is that of Protein misato (mst) from Drosophila melanogaster (Fruit fly).